The sequence spans 399 residues: Acetate kinase (399 aa).

A Mg(2+)-binding site is contributed by asparagine 10. Lysine 17 is an ATP binding site. Arginine 91 is a binding site for substrate. The active-site Proton donor/acceptor is aspartate 148. ATP-binding positions include 208 to 212, 283 to 285, and 331 to 335; these read HLGNG, DCR, and GIGEN. Glutamate 385 is a binding site for Mg(2+).

It belongs to the acetokinase family. In terms of assembly, homodimer. Mg(2+) serves as cofactor. Requires Mn(2+) as cofactor.

It is found in the cytoplasm. The enzyme catalyses acetate + ATP = acetyl phosphate + ADP. Its pathway is metabolic intermediate biosynthesis; acetyl-CoA biosynthesis; acetyl-CoA from acetate: step 1/2. Functionally, catalyzes the formation of acetyl phosphate from acetate and ATP. Can also catalyze the reverse reaction. This Shewanella amazonensis (strain ATCC BAA-1098 / SB2B) protein is Acetate kinase.